A 981-amino-acid polypeptide reads, in one-letter code: RNA polymerase II assembly factor RTP1 (981 aa).

HEAT repeat units follow at residues 64–101 (SNNNEFVAVLLQKFQNLHIHVLEQQRRLIESKSDLLPI), 161–199 (DTLSQVITVFYNVLTSERSSDYLREIISKGSAYANILLG), 226–261 (YTLFGVYTLLVETIQDEKVREPILSKLTTLTLRRPE), 366–403 (KELNDVINVLISLSKNSSSDLLNDLVTSCPDEDGTTPG), 609–646 (KDVLIVIDQLIDVVQEKDETIQEVEADSDDEVEEGEET), 655–692 (SSYKIILQLLSTVLSESSSSILLQNSYILKSISRKLQS), 765–799 (ISLEKVLQIHLDYLKNMDPFIYLNVIKGLTTLCEL), 800–836 (EPETILPLLAEFYANKKKKNRLDDVLKVGEVFINYIQ), and 945–980 (EYNYDKLKTLLSYVRDQDEDYMVCEQIDKLLTVLDS). Residues 630–651 (QEVEADSDDEVEEGEETEELDP) show a composition bias toward acidic residues. A disordered region spans residues 630 to 652 (QEVEADSDDEVEEGEETEELDPN).

This sequence belongs to the Tango6 family. Interacts with RNA polymerase II subunits RPB2 and RPB3. Interacts with the R2TP complex. Interacts with the nuclear pore complex subunits NUP100 and NUP116.

Its subcellular location is the cytoplasm. Functionally, required for the cytoplasmic assembly and the nuclear import of RNA polymerase II. May facilitate the starting interaction between RNA polymerase II subunits RPB2 and RPB3 and the subsequent interaction of the resulting complex with subunit RPB1. May also participate in the transport of RNA polymerase II through the nuclear pore complex. In Saccharomyces cerevisiae (strain ATCC 204508 / S288c) (Baker's yeast), this protein is RNA polymerase II assembly factor RTP1.